Here is a 65-residue protein sequence, read N- to C-terminus: Large ribosomal subunit protein bL35 (65 aa).

This sequence belongs to the bacterial ribosomal protein bL35 family.

The polypeptide is Large ribosomal subunit protein bL35 (Ruminiclostridium cellulolyticum (strain ATCC 35319 / DSM 5812 / JCM 6584 / H10) (Clostridium cellulolyticum)).